We begin with the raw amino-acid sequence, 170 residues long: Small ribosomal subunit protein uS3mA (170 aa).

A mitochondrion-targeting transit peptide spans 1 to 30 (MAAPVMSALGRLQGLIRTERSLLTHVQSRC).

Belongs to the universal ribosomal protein uS3 family. In terms of assembly, component of the mitochondrial ribosome small subunit (28S) which comprises a 12S rRNA and about 30 distinct proteins.

The protein localises to the mitochondrion. The sequence is that of Small ribosomal subunit protein uS3mA (mrps24-a) from Xenopus laevis (African clawed frog).